Consider the following 134-residue polypeptide: Transcription antitermination protein NusB (134 aa).

Belongs to the NusB family.

Involved in transcription antitermination. Required for transcription of ribosomal RNA (rRNA) genes. Binds specifically to the boxA antiterminator sequence of the ribosomal RNA (rrn) operons. This Halothermothrix orenii (strain H 168 / OCM 544 / DSM 9562) protein is Transcription antitermination protein NusB.